The primary structure comprises 144 residues: Large ribosomal subunit protein uL14 (144 aa).

It belongs to the universal ribosomal protein uL14 family. As to quaternary structure, part of the 50S ribosomal subunit. Forms a cluster with proteins L3 and L24e, part of which may contact the 16S rRNA in 2 intersubunit bridges.

In terms of biological role, binds to 23S rRNA. Forms part of two intersubunit bridges in the 70S ribosome. This is Large ribosomal subunit protein uL14 from Cenarchaeum symbiosum (strain A).